Reading from the N-terminus, the 391-residue chain is Histidinol-phosphate aminotransferase (391 aa).

An N6-(pyridoxal phosphate)lysine modification is found at lysine 246.

Belongs to the class-II pyridoxal-phosphate-dependent aminotransferase family. Histidinol-phosphate aminotransferase subfamily. Pyridoxal 5'-phosphate serves as cofactor.

It carries out the reaction L-histidinol phosphate + 2-oxoglutarate = 3-(imidazol-4-yl)-2-oxopropyl phosphate + L-glutamate. It participates in amino-acid biosynthesis; L-histidine biosynthesis; L-histidine from 5-phospho-alpha-D-ribose 1-diphosphate: step 7/9. The polypeptide is Histidinol-phosphate aminotransferase (Methanopyrus kandleri (strain AV19 / DSM 6324 / JCM 9639 / NBRC 100938)).